A 415-amino-acid polypeptide reads, in one-letter code: Tyrosine--tRNA ligase (415 aa).

Tyrosine 34 provides a ligand contact to L-tyrosine. Residues 39–48 (PTADSLHLGH) carry the 'HIGH' region motif. Positions 164 and 168 each coordinate L-tyrosine. A 'KMSKS' region motif is present at residues 226–230 (KFGKS). Residue lysine 229 participates in ATP binding. An S4 RNA-binding domain is found at 348 to 415 (KNIVDFLVDG…KKKYFLGKIK (68 aa)).

This sequence belongs to the class-I aminoacyl-tRNA synthetase family. TyrS type 1 subfamily. Homodimer.

The protein resides in the cytoplasm. It catalyses the reaction tRNA(Tyr) + L-tyrosine + ATP = L-tyrosyl-tRNA(Tyr) + AMP + diphosphate + H(+). Functionally, catalyzes the attachment of tyrosine to tRNA(Tyr) in a two-step reaction: tyrosine is first activated by ATP to form Tyr-AMP and then transferred to the acceptor end of tRNA(Tyr). The polypeptide is Tyrosine--tRNA ligase (Leuconostoc citreum (strain KM20)).